We begin with the raw amino-acid sequence, 265 residues long: 4-hydroxy-2-oxo-heptane-1,7-dioate aldolase (265 aa).

The active-site Proton acceptor is the His-45. Gln-147 contacts substrate. Glu-149 is an a divalent metal cation binding site. Substrate is bound by residues Ala-174 and Asp-175. Position 175 (Asp-175) interacts with a divalent metal cation.

The protein belongs to the HpcH/HpaI aldolase family. In terms of assembly, homohexamer; trimer of dimers. It depends on a divalent metal cation as a cofactor.

It carries out the reaction 4-hydroxy-2-oxoheptanedioate = succinate semialdehyde + pyruvate. It functions in the pathway aromatic compound metabolism; 4-hydroxyphenylacetate degradation; pyruvate and succinate semialdehyde from 4-hydroxyphenylacetate: step 7/7. Functionally, catalyzes the reversible retro-aldol cleavage of 4-hydroxy-2-ketoheptane-1,7-dioate (HKHD) to pyruvate and succinic semialdehyde. The protein is 4-hydroxy-2-oxo-heptane-1,7-dioate aldolase of Klebsiella pneumoniae subsp. pneumoniae (strain ATCC 700721 / MGH 78578).